Reading from the N-terminus, the 443-residue chain is Carboxypeptidase M (443 aa).

Residues 1–17 (MDFPCLWLGLLLPLVAA) form the signal peptide. Residues 21-311 (NYHRQEGMEA…ASLIEYIKQV (291 aa)) form the Peptidase M14 domain. N-linked (GlcNAc...) asparagine glycosylation occurs at N38. Zn(2+) contacts are provided by H83 and E86. Residues N115 and N164 are each glycosylated (N-linked (GlcNAc...) asparagine). 3 disulfide bridges follow: C138/C285, C242/C284, and C341/C410. H190 is a binding site for Zn(2+). The active-site Proton donor/acceptor is E281. N363 and N384 each carry an N-linked (GlcNAc...) asparagine glycan. S423 is lipidated: GPI-anchor amidated serine. Positions 424-443 (AATKPSLFLFLVSLLHIFFK) are cleaved as a propeptide — removed in mature form.

It belongs to the peptidase M14 family. Requires Zn(2+) as cofactor.

Its subcellular location is the cell membrane. It catalyses the reaction Cleavage of C-terminal arginine or lysine residues from polypeptides.. Its activity is regulated as follows. Inhibited by O-phenanthroline and MGTA and activated by cobalt. Its function is as follows. Specifically removes C-terminal basic residues (Arg or Lys) from peptides and proteins. It is believed to play important roles in the control of peptide hormone and growth factor activity at the cell surface, and in the membrane-localized degradation of extracellular proteins. The chain is Carboxypeptidase M (CPM) from Homo sapiens (Human).